A 138-amino-acid chain; its full sequence is Ribosome-binding factor A (138 aa).

This sequence belongs to the RbfA family. As to quaternary structure, monomer. Binds 30S ribosomal subunits, but not 50S ribosomal subunits or 70S ribosomes.

The protein resides in the cytoplasm. Its function is as follows. One of several proteins that assist in the late maturation steps of the functional core of the 30S ribosomal subunit. Associates with free 30S ribosomal subunits (but not with 30S subunits that are part of 70S ribosomes or polysomes). Required for efficient processing of 16S rRNA. May interact with the 5'-terminal helix region of 16S rRNA. This chain is Ribosome-binding factor A, found in Paracoccus denitrificans (strain Pd 1222).